The chain runs to 204 residues: MIGRLRGIILEKQPPVVLIEASGVGYEVQMPMTCFYELPDIQHEAIIFTHFVVREDAQLLFGFNSKPERALFRELIKVNGVGPKLALAILSGMSAQQFVTAVEREEIAALVKLPGVGKKTAERLVVEMKDRFKGMHGDLFASDAPFALTSEMPKETANDAEGEAVAALTALGYKPQEASRMIVKVGKPDADCETLIREALRAAI.

Positions methionine 1 to asparagine 64 are domain I. Residues serine 65–aspartate 143 form a domain II region. Residues alanine 144–glutamate 155 form a flexible linker region. The tract at residues threonine 156–isoleucine 204 is domain III.

This sequence belongs to the RuvA family. Homotetramer. Forms an RuvA(8)-RuvB(12)-Holliday junction (HJ) complex. HJ DNA is sandwiched between 2 RuvA tetramers; dsDNA enters through RuvA and exits via RuvB. An RuvB hexamer assembles on each DNA strand where it exits the tetramer. Each RuvB hexamer is contacted by two RuvA subunits (via domain III) on 2 adjacent RuvB subunits; this complex drives branch migration. In the full resolvosome a probable DNA-RuvA(4)-RuvB(12)-RuvC(2) complex forms which resolves the HJ.

It localises to the cytoplasm. Functionally, the RuvA-RuvB-RuvC complex processes Holliday junction (HJ) DNA during genetic recombination and DNA repair, while the RuvA-RuvB complex plays an important role in the rescue of blocked DNA replication forks via replication fork reversal (RFR). RuvA specifically binds to HJ cruciform DNA, conferring on it an open structure. The RuvB hexamer acts as an ATP-dependent pump, pulling dsDNA into and through the RuvAB complex. HJ branch migration allows RuvC to scan DNA until it finds its consensus sequence, where it cleaves and resolves the cruciform DNA. This chain is Holliday junction branch migration complex subunit RuvA, found in Erwinia tasmaniensis (strain DSM 17950 / CFBP 7177 / CIP 109463 / NCPPB 4357 / Et1/99).